A 474-amino-acid polypeptide reads, in one-letter code: Peroxisome proliferator-activated receptor alpha (474 aa).

The segment at residues 106–180 (NLECRVCSDK…VGMSHNAIRF (75 aa)) is a DNA-binding region (nuclear receptor). 2 consecutive NR C4-type zinc fingers follow at residues 109–129 (CRVC…CEGC) and 146–168 (CERM…FEKC). The 228-residue stretch at 245–472 (FVIHDMETLC…HPLLQEIYRD (228 aa)) folds into the NR LBD domain.

It belongs to the nuclear hormone receptor family. NR1 subfamily. In terms of assembly, heterodimer with the retinoid X receptor. Ubiquitous.

It localises to the nucleus. In terms of biological role, ligand-activated transcription factor. Key regulator of lipid metabolism. Activated by lipids. Receptor for peroxisome proliferators such as hypolipidemic drugs and fatty acids. Once activated by a ligand, the receptor binds to promoter elements of target genes. Regulates the peroxisomal beta-oxidation pathway of fatty acids. In Xenopus laevis (African clawed frog), this protein is Peroxisome proliferator-activated receptor alpha (ppara).